Consider the following 574-residue polypeptide: Membrane protein insertase YidC (574 aa).

Transmembrane regions (helical) follow at residues 6-26 (VFLI…WGKE), 350-370 (VIDY…FWVL), 376-396 (FLHN…LVLY), 447-467 (GGCL…WVLV), 491-511 (FILP…TPTP), and 525-545 (PLVF…YWVV).

It belongs to the OXA1/ALB3/YidC family. Type 1 subfamily. In terms of assembly, interacts with the Sec translocase complex via SecD. Specifically interacts with transmembrane segments of nascent integral membrane proteins during membrane integration.

It is found in the cell inner membrane. Required for the insertion and/or proper folding and/or complex formation of integral membrane proteins into the membrane. Involved in integration of membrane proteins that insert both dependently and independently of the Sec translocase complex, as well as at least some lipoproteins. Aids folding of multispanning membrane proteins. The protein is Membrane protein insertase YidC of Xanthomonas oryzae pv. oryzae (strain KACC10331 / KXO85).